A 58-amino-acid polypeptide reads, in one-letter code: Cecropin-B (58 aa).

The signal sequence occupies residues 1–21 (ILSFVFACLLALSAVSAAPEP).

The protein belongs to the cecropin family.

Its subcellular location is the secreted. Functionally, cecropins have lytic and antibacterial activity against several Gram-positive and Gram-negative bacteria. The polypeptide is Cecropin-B (CECB) (Spodoptera litura (Asian cotton leafworm)).